Here is a 689-residue protein sequence, read N- to C-terminus: DNA ligase (689 aa).

NAD(+)-binding positions include 40-44, 89-90, and glutamate 121; these read DSEYD and SL. The N6-AMP-lysine intermediate role is filled by lysine 123. Arginine 144, glutamate 179, lysine 295, and lysine 319 together coordinate NAD(+). Positions 413, 416, 431, and 437 each coordinate Zn(2+). Residues 610 to 689 enclose the BRCT domain; sequence REQNILTGKI…VEWLAFIKNA (80 aa).

This sequence belongs to the NAD-dependent DNA ligase family. LigA subfamily. Mg(2+) serves as cofactor. Mn(2+) is required as a cofactor.

It catalyses the reaction NAD(+) + (deoxyribonucleotide)n-3'-hydroxyl + 5'-phospho-(deoxyribonucleotide)m = (deoxyribonucleotide)n+m + AMP + beta-nicotinamide D-nucleotide.. DNA ligase that catalyzes the formation of phosphodiester linkages between 5'-phosphoryl and 3'-hydroxyl groups in double-stranded DNA using NAD as a coenzyme and as the energy source for the reaction. It is essential for DNA replication and repair of damaged DNA. This is DNA ligase from Rickettsia prowazekii (strain Madrid E).